The chain runs to 422 residues: Phospho-N-acetylmuramoyl-pentapeptide-transferase (422 aa).

9 helical membrane-spanning segments follow: residues 28–48 (LMAIILALLISSIWGDKFINL), 71–91 (VGVPSMGGVIIIVAILIPCLL), 95–115 (LHNIYMILMLITTVWLGSLGF), 136–156 (IIGQVGLGLIVGLTLYLSPDV), 211–231 (AGWILFVIITIFVVTAVSNGA), 246–266 (AIIGLTLGILAYVSSHIEFAG), 279–299 (LVIFICAFIGALIGFLWYNAY), 313–333 (IGGIIAVFAIIIHKELLIPIL), and 399–419 (KITVRFWIVTIVLAAITIITL).

It belongs to the glycosyltransferase 4 family. MraY subfamily. Mg(2+) serves as cofactor.

Its subcellular location is the cell inner membrane. The enzyme catalyses UDP-N-acetyl-alpha-D-muramoyl-L-alanyl-gamma-D-glutamyl-meso-2,6-diaminopimeloyl-D-alanyl-D-alanine + di-trans,octa-cis-undecaprenyl phosphate = di-trans,octa-cis-undecaprenyl diphospho-N-acetyl-alpha-D-muramoyl-L-alanyl-D-glutamyl-meso-2,6-diaminopimeloyl-D-alanyl-D-alanine + UMP. It functions in the pathway cell wall biogenesis; peptidoglycan biosynthesis. Functionally, catalyzes the initial step of the lipid cycle reactions in the biosynthesis of the cell wall peptidoglycan: transfers peptidoglycan precursor phospho-MurNAc-pentapeptide from UDP-MurNAc-pentapeptide onto the lipid carrier undecaprenyl phosphate, yielding undecaprenyl-pyrophosphoryl-MurNAc-pentapeptide, known as lipid I. The chain is Phospho-N-acetylmuramoyl-pentapeptide-transferase from Bacteroides fragilis (strain ATCC 25285 / DSM 2151 / CCUG 4856 / JCM 11019 / LMG 10263 / NCTC 9343 / Onslow / VPI 2553 / EN-2).